The sequence spans 80 residues: Phosphoribosylformylglycinamidine synthase subunit PurS (80 aa).

The protein belongs to the PurS family. Homodimer. Part of the FGAM synthase complex composed of 1 PurL, 1 PurQ and 2 PurS subunits.

The protein resides in the cytoplasm. It carries out the reaction N(2)-formyl-N(1)-(5-phospho-beta-D-ribosyl)glycinamide + L-glutamine + ATP + H2O = 2-formamido-N(1)-(5-O-phospho-beta-D-ribosyl)acetamidine + L-glutamate + ADP + phosphate + H(+). It functions in the pathway purine metabolism; IMP biosynthesis via de novo pathway; 5-amino-1-(5-phospho-D-ribosyl)imidazole from N(2)-formyl-N(1)-(5-phospho-D-ribosyl)glycinamide: step 1/2. In terms of biological role, part of the phosphoribosylformylglycinamidine synthase complex involved in the purines biosynthetic pathway. Catalyzes the ATP-dependent conversion of formylglycinamide ribonucleotide (FGAR) and glutamine to yield formylglycinamidine ribonucleotide (FGAM) and glutamate. The FGAM synthase complex is composed of three subunits. PurQ produces an ammonia molecule by converting glutamine to glutamate. PurL transfers the ammonia molecule to FGAR to form FGAM in an ATP-dependent manner. PurS interacts with PurQ and PurL and is thought to assist in the transfer of the ammonia molecule from PurQ to PurL. The polypeptide is Phosphoribosylformylglycinamidine synthase subunit PurS (Archaeoglobus fulgidus (strain ATCC 49558 / DSM 4304 / JCM 9628 / NBRC 100126 / VC-16)).